The chain runs to 28 residues: Cyclotide vodo I3 (28 aa).

3 disulfide bridges follow: Cys-4-Cys-18, Cys-8-Cys-20, and Cys-13-Cys-25.

Post-translationally, this is a cyclic peptide. In terms of processing, contains 3 disulfide bonds.

Functionally, probably participates in a plant defense mechanism. The protein is Cyclotide vodo I3 of Viola odorata (Sweet violet).